The primary structure comprises 351 residues: UDP-3-O-acylglucosamine N-acyltransferase 1 (351 aa).

H237 serves as the catalytic Proton acceptor.

The protein belongs to the transferase hexapeptide repeat family. LpxD subfamily. Homotrimer.

The catalysed reaction is a UDP-3-O-[(3R)-3-hydroxyacyl]-alpha-D-glucosamine + a (3R)-hydroxyacyl-[ACP] = a UDP-2-N,3-O-bis[(3R)-3-hydroxyacyl]-alpha-D-glucosamine + holo-[ACP] + H(+). Its pathway is bacterial outer membrane biogenesis; LPS lipid A biosynthesis. Functionally, catalyzes the N-acylation of UDP-3-O-acylglucosamine using 3-hydroxyacyl-ACP as the acyl donor. Is involved in the biosynthesis of lipid A, a phosphorylated glycolipid that anchors the lipopolysaccharide to the outer membrane of the cell. This Legionella pneumophila (strain Paris) protein is UDP-3-O-acylglucosamine N-acyltransferase 1.